A 313-amino-acid polypeptide reads, in one-letter code: Ornithine carbamoyltransferase (313 aa).

Carbamoyl phosphate is bound by residues 57–60 (STRT), Gln-84, Arg-108, and 135–138 (HPTQ). Residues Asn-167, Asp-231, and 235-236 (SM) contribute to the L-ornithine site. Residues 272 to 273 (CL) and Arg-300 contribute to the carbamoyl phosphate site.

It belongs to the aspartate/ornithine carbamoyltransferase superfamily. OTCase family.

It is found in the cytoplasm. It catalyses the reaction carbamoyl phosphate + L-ornithine = L-citrulline + phosphate + H(+). The protein operates within amino-acid biosynthesis; L-arginine biosynthesis; L-arginine from L-ornithine and carbamoyl phosphate: step 1/3. Functionally, reversibly catalyzes the transfer of the carbamoyl group from carbamoyl phosphate (CP) to the N(epsilon) atom of ornithine (ORN) to produce L-citrulline. This chain is Ornithine carbamoyltransferase, found in Pseudothermotoga lettingae (strain ATCC BAA-301 / DSM 14385 / NBRC 107922 / TMO) (Thermotoga lettingae).